The sequence spans 589 residues: Complement component C8 beta chain (589 aa).

The N-terminal stretch at 1–31 (MKTGAQVWRALAKSCLLCAALGCLHLPGARG) is a signal peptide. The propeptide occupies 32 to 53 (EKPDFFETNAVNGSLVRSRPVR). Asparagine 43 carries N-linked (GlcNAc...) asparagine glycosylation. A TSP type-1 1 domain is found at 63-116 (DCQLSTWSSWTACDPCQKKRYRHTYLLRPSQFYGELCDFSDKEVEDCVTNRACR). Cystine bridges form between cysteine 64-cysteine 99, cysteine 75-cysteine 109, cysteine 78-cysteine 115, cysteine 121-cysteine 132, cysteine 126-cysteine 145, cysteine 139-cysteine 154, and cysteine 161-cysteine 199. C-linked (Man) tryptophan glycosylation is found at tryptophan 69 and tryptophan 72. Positions 120-155 (RCEGFVCAQTGRCVNRRLLCNGDNDCGDQSDEANCR) constitute an LDL-receptor class A domain. Leucine 137, asparagine 140, aspartate 142, aspartate 144, aspartate 150, and glutamate 151 together coordinate Ca(2+). In terms of domain architecture, MACPF spans 157-503 (IYKKCSQDME…EFQMEVSSCR (347 aa)). An N-linked (GlcNAc...) asparagine glycan is attached at asparagine 242. Transmembrane regions (beta stranded) follow at residues 251–258 (SSFKFGFK), 261–268 (GLVEFGVR), 378–385 (AGGGFQIG), and 391–398 (VYLKLGVS). A disulfide bridge connects residues cysteine 377 and cysteine 402. Threonine 417 carries the post-translational modification Phosphothreonine. 4 disulfide bridges follow: cysteine 502–cysteine 549, cysteine 504–cysteine 520, cysteine 507–cysteine 522, and cysteine 524–cysteine 533. One can recognise an EGF-like domain in the interval 504–534 (CAPCRNNGVPILKESRCECICPAGFQGVACE). In terms of domain architecture, TSP type-1 2 spans 544–587 (DGKWSCWSDWSPCSGGRKTRQRQCNNPAPQRGGSPCSGPASETL). C-linked (Man) tryptophan glycosylation is found at tryptophan 550 and tryptophan 553. Cysteine 556 and cysteine 589 are joined by a disulfide. Residues 556 to 589 (CSGGRKTRQRQCNNPAPQRGGSPCSGPASETLDC) form a disordered region.

Belongs to the complement C6/C7/C8/C9 family. In terms of assembly, heterotrimer of 3 chains: alpha (C8A), beta (C8B) and gamma (C8G); the alpha and gamma chains are disulfide bonded. Component of the membrane attack complex (MAC), composed of complement C5b, C6, C7, C8A, C8B, C8G and multiple copies of the pore-forming subunit C9. N-glycosylated; contains one or two bound glycans. Not O-glycosylated.

The protein resides in the secreted. It is found in the target cell membrane. With respect to regulation, membrane attack complex (MAC) assembly is inhibited by CD59, thereby protecting self-cells from damage during complement activation. CD59 acts by binding to the beta-haipins of C8 (C8A and C8B), forming an intermolecular beta-sheet that prevents incorporation of the multiple copies of C9 required for complete formation of the osmolytic pore. MAC assembly is also inhibited by clusterin (CLU) chaperones that inhibit polymerization of C9. Its function is as follows. Component of the membrane attack complex (MAC), a multiprotein complex activated by the complement cascade, which inserts into a target cell membrane and forms a pore, leading to target cell membrane rupture and cell lysis. The MAC is initiated by proteolytic cleavage of C5 into complement C5b in response to the classical, alternative, lectin and GZMK complement pathways. The complement pathways consist in a cascade of proteins that leads to phagocytosis and breakdown of pathogens and signaling that strengthens the adaptive immune system. C8B, together with C8A and C8G, inserts into the target membrane, but does not form pores by itself. During MAC assembly, associates with C5b, C6 and C7 to form the C5b8 intermediate complex that inserts into the target membrane and traverses the bilayer increasing membrane rigidity. The sequence is that of Complement component C8 beta chain (C8b) from Rattus norvegicus (Rat).